The primary structure comprises 186 residues: Ribosome-recycling factor (186 aa).

The protein belongs to the RRF family.

The protein localises to the cytoplasm. Its function is as follows. Responsible for the release of ribosomes from messenger RNA at the termination of protein biosynthesis. May increase the efficiency of translation by recycling ribosomes from one round of translation to another. The chain is Ribosome-recycling factor from Acidovorax ebreus (strain TPSY) (Diaphorobacter sp. (strain TPSY)).